A 331-amino-acid polypeptide reads, in one-letter code: MGRLILEHTLQGHKGRIWGVAWHPKGNSFASCGEDKAIRIWSLSGNTWTTKTILSDGHKRTIREVRWSPCGEYLASASFDATTAIWSKHECTATLEGHENEVKSVSWSRSGGLLATCSRDKSVWIWEVAGDDEFECAAVLNAHSQDVKRVVWHPTKEILASASYDNTIKMYAESALDSDWDCTATLSSHTSTVWSIDFDADGERLVSCSDDATLKIWRAYHPGNEAGIATPDKTTVWKCVCTLSGLHTRAIYDVSWCKLTGLIASACGDDAIRIFKESSDSKRDAPSFELLTSEESAHEQDVNAVEWNPVNVGQLISCSDDGTIKIWKLQE.

7 WD repeats span residues 12-51 (GHKG…WTTK), 57-96 (GHKR…ATLE), 97-136 (GHEN…EFEC), 142-181 (AHSQ…SDWD), 188-227 (SHTS…NEAG), 246-285 (LHTR…KRDA), and 297-331 (AHEQ…KLQE).

This sequence belongs to the WD repeat CIA1 family.

In terms of biological role, essential component of the cytosolic iron-sulfur (Fe/S) protein assembly machinery. Required for the maturation of extramitochondrial Fe/S proteins. The sequence is that of Probable cytosolic iron-sulfur protein assembly protein Ciao1 from Drosophila mojavensis (Fruit fly).